A 203-amino-acid polypeptide reads, in one-letter code: Non-specific lipid transfer protein GPI-anchored 20 (203 aa).

Residues 1–21 (MSKIISLVVAMIAVLALPIRG) form the signal peptide. 4 disulfides stabilise this stretch: Cys29-Cys74, Cys40-Cys58, Cys59-Cys99, and Cys72-Cys108. Asn46, Asn50, and Asn88 each carry an N-linked (GlcNAc...) asparagine glycan. The segment at 119-182 (GPAATFGPSM…TSRPSETPSS (64 aa)) is disordered. Polar residues-rich tracts occupy residues 144 to 156 (AAQTPQSDTTRPF) and 169 to 179 (DGGSTSRPSET). The GPI-anchor amidated serine moiety is linked to residue Ser172. A propeptide spans 173 to 203 (TSRPSETPSSAYALSPSLLFFSIALVALKFY) (removed in mature form).

It belongs to the plant LTP family. Expressed in seedlings, preferentially in hypocotyls and roots. Also observed in siliques and sepals.

It is found in the cell membrane. Its function is as follows. Probable lipid transfer protein. This Arabidopsis thaliana (Mouse-ear cress) protein is Non-specific lipid transfer protein GPI-anchored 20.